The chain runs to 1762 residues: Non-reducing polyketide synthase PKS8-1 (1762 aa).

An N-terminal acylcarrier protein transacylase domain (SAT) region spans residues 17–247 (DIYRGLHNHS…ARYIELPVYG (231 aa)). Residues 385 to 819 (QSKLAITGIS…GGNTTMVLEE (435 aa)) form the Ketosynthase family 3 (KS3) domain. Catalysis depends on for beta-ketoacyl synthase activity residues Cys558, His694, and His737. A malonyl-CoA:ACP transacylase (MAT) domain region spans residues 920-1240 (FSFTGQGASH…MAALHLTGVA (321 aa)). Positions 1308 to 1622 (TSTVQQVIAL…PRILLNRFFS (315 aa)) are product template (PT) domain. Positions 1312 to 1448 (QQVIALEVEG…GDANDWLSSW (137 aa)) are N-terminal hotdog fold. The PKS/mFAS DH domain maps to 1312-1618 (QQVIALEVEG…FRSYPRILLN (307 aa)). The active-site Proton acceptor; for dehydratase activity is the His1344. Residues 1471 to 1618 (ASRFTRNMAY…FRSYPRILLN (148 aa)) are C-terminal hotdog fold. Asp1529 acts as the Proton donor; for dehydratase activity in catalysis. The interval 1632–1689 (RAGNAATVTPQVTIPKPPSSLKTPAPANPSRRDSGVESKPLPPPQPKQAPPSTDSENS) is disordered. A compositionally biased stretch (pro residues) spans 1671 to 1680 (PLPPPQPKQA). The 78-residue stretch at 1685-1762 (DSENSTISKA…DMRRWLEEHY (78 aa)) folds into the Carrier domain. Ser1722 is subject to O-(pantetheine 4'-phosphoryl)serine.

The enzyme catalyses holo-[ACP] + 8 malonyl-CoA + 8 H(+) = atrochrysone carboxyl-[ACP] + 8 CO2 + 8 CoA + 2 H2O. The protein operates within secondary metabolite biosynthesis. Functionally, non-reducing polyketide synthase; part of the gene cluster that mediates the biosynthesis of an emodin derivative that may be involved in black Sigatoka disease of banana. The pathway begins with the synthesis of atrochrysone thioester by the polyketide synthase PKS8-1. The atrochrysone carboxyl ACP thioesterase MYCFIDRAFT_190111 then breaks the thioester bond and releases the atrochrysone carboxylic acid from PKS8-1. The decarboxylase MYCFIDRAFT_34057 then catalyzes the concerted decarboxylation-elimination required to convert atochrysone carboxylic acid into emodin anthrone, which is further oxidized to emodin by the anthrone oxygenase MYCFIDRAFT_34418. The functions of the other tailoring enzymes as well as the final product of the cluster have still to be identified. The chain is Non-reducing polyketide synthase PKS8-1 (PKS8-1) from Pseudocercospora fijiensis (strain CIRAD86) (Black leaf streak disease fungus).